The following is a 172-amino-acid chain: MNHFELFNLPVALDIDLASLKSNFLSLQQQYHPDKAADKDQALIKSSEINQAFKTLSQVDSRAAYLLALKKQDHHLDQSISDFEFLQSALELREQLDEATSSEHLRTLRLEVQQWIDGLVREFKIDYSEEDWSEARDTVRKLRFFQRVLNDIDKAEDQLLDDEDSFDLDDDF.

The J domain occupies 2 to 69 (NHFELFNLPV…DSRAAYLLAL (68 aa)).

This sequence belongs to the HscB family. As to quaternary structure, interacts with HscA and stimulates its ATPase activity.

Its function is as follows. Co-chaperone involved in the maturation of iron-sulfur cluster-containing proteins. Seems to help targeting proteins to be folded toward HscA. The protein is Co-chaperone protein HscB homolog of Acinetobacter baumannii (strain SDF).